Here is a 187-residue protein sequence, read N- to C-terminus: GTP cyclohydrolase 1 (187 aa).

Zn(2+) is bound by residues Cys81, His84, and Cys152.

Belongs to the GTP cyclohydrolase I family. In terms of assembly, toroid-shaped homodecamer, composed of two pentamers of five dimers.

The catalysed reaction is GTP + H2O = 7,8-dihydroneopterin 3'-triphosphate + formate + H(+). Its pathway is cofactor biosynthesis; 7,8-dihydroneopterin triphosphate biosynthesis; 7,8-dihydroneopterin triphosphate from GTP: step 1/1. The sequence is that of GTP cyclohydrolase 1 from Pyrobaculum aerophilum (strain ATCC 51768 / DSM 7523 / JCM 9630 / CIP 104966 / NBRC 100827 / IM2).